A 267-amino-acid chain; its full sequence is Taurine import ATP-binding protein TauB (267 aa).

The 233-residue stretch at 6–238 folds into the ABC transporter domain; that stretch reads FNEASLIYPA…DILAGAPASE (233 aa). 43 to 50 contributes to the ATP binding site; it reads GRSGSGKT.

This sequence belongs to the ABC transporter superfamily. Taurine importer (TC 3.A.1.17.1) family. As to quaternary structure, the complex is composed of two ATP-binding proteins (TauB), two transmembrane proteins (TauC) and a solute-binding protein (TauA).

It is found in the cell inner membrane. The enzyme catalyses taurine(out) + ATP + H2O = taurine(in) + ADP + phosphate + H(+). In terms of biological role, part of the ABC transporter complex TauABC involved in taurine import. Responsible for energy coupling to the transport system. The polypeptide is Taurine import ATP-binding protein TauB (Sinorhizobium fredii (strain NBRC 101917 / NGR234)).